The chain runs to 355 residues: Protein RecA (355 aa).

Residue 72–79 coordinates ATP; it reads GPESSGKT.

Belongs to the RecA family.

Its subcellular location is the cytoplasm. Its function is as follows. Can catalyze the hydrolysis of ATP in the presence of single-stranded DNA, the ATP-dependent uptake of single-stranded DNA by duplex DNA, and the ATP-dependent hybridization of homologous single-stranded DNAs. It interacts with LexA causing its activation and leading to its autocatalytic cleavage. In Wolbachia pipientis subsp. Culex pipiens (strain wPip), this protein is Protein RecA.